Here is a 188-residue protein sequence, read N- to C-terminus: Adenine phosphoribosyltransferase (188 aa).

It belongs to the purine/pyrimidine phosphoribosyltransferase family. In terms of assembly, homodimer.

Its subcellular location is the cytoplasm. The enzyme catalyses AMP + diphosphate = 5-phospho-alpha-D-ribose 1-diphosphate + adenine. The protein operates within purine metabolism; AMP biosynthesis via salvage pathway; AMP from adenine: step 1/1. Functionally, catalyzes a salvage reaction resulting in the formation of AMP, that is energically less costly than de novo synthesis. The polypeptide is Adenine phosphoribosyltransferase (Salinispora arenicola (strain CNS-205)).